The primary structure comprises 1732 residues: Lys-gingipain W83 (1732 aa).

Residues 1–24 form the signal peptide; it reads MRKLLLLIAASLLGVGLYAQSAKI. A propeptide spanning residues 25 to 228 is cleaved from the precursor; it reads KLDAPTTRTT…ETAYKQLFNR (204 aa). Ca(2+) is bound by residues Asp313, Asp337, Asp339, Phe341, and Glu343. Catalysis depends on His444, which acts as the Proton donor. Cys477 functions as the Nucleophile in the catalytic mechanism. The Ca(2+) site is built by Phe482 and Glu491. The interval 965–988 is disordered; that stretch reads DAPNGTPNPNPNPNPNPGTTLSES. Residues 970–980 are compositionally biased toward pro residues; the sequence is TPNPNPNPNPN. 21 residues coordinate Ca(2+): Ser988, Glu990, Asp1001, Asp1003, Asp1005, His1007, Ser1022, Gly1024, Asn1043, Asp1146, Glu1147, Asp1433, Glu1435, Asp1446, Asp1448, Asp1450, Asn1452, Ser1470, Ile1472, Asn1490, and Asp1595.

Belongs to the peptidase C25 family. Proteolytically cleaved into a catalytic subunit and three adhesins. Arg-gingipain is involved in this post-translational processing.

Its subcellular location is the secreted. It catalyses the reaction Endopeptidase with strict specificity for lysyl bonds.. Functionally, cysteine proteinase with a strong preference for substrates with Lys in the P1 position. Hydrolyzes bovine hemoglobin, bovine serum albumin, casein, human placental type I collagen and human IgA and IgG. Disrupts the functions of polymorphonuclear leukocytes. May act as a virulence factor in the development of peridontal disease. Involved in the coaggregation of P.gingivalis with other oral bacteria. Has hemolytic activity; this is mediated by the adhesin domains and does not require the catalytic domain. The sequence is that of Lys-gingipain W83 from Porphyromonas gingivalis (Bacteroides gingivalis).